The sequence spans 829 residues: MKLSRRDFMKANAVAAAAAVAGVSAPTLAANLITSTDKTAITWDKAPCRFCGTGCSVLVGSQDGRVVATQGDPDAPVNRGLNCIKGYFLSKIMYGQDRLTQPMLRMTDGKFDKNGNFAPISWDQAFDIMAEKFKTTLKEKGPTAVGMFGSGQWTVWEGYAAAKLMKAGLRTNNLDPNARHCMASAVVGFMRTFGMDEPMGCYDDIEQADAFVLWGSNMAEMHPILWSRISDRRLSHQDVQVHVLSTFEHRSFELADNGMVFTPQTDLAILNYIANYIIQNDKVNWEFVNKHTQFRKGVTDIGYGLRPTNPLQQKAKNPDSGDSTPMSFDDFAKFVADYDLESVSKLSGVPKDKLEKLAQLYADPSKKVVSYWTMGFNQHTRGVWANNLCYNIHLLTGKISTPGSGPFSLTGQPSACGTAREVGTFAHRLPADMVVTEPKHRAIAEKIWKLPEGTIPEQVGYHAVLQNRMLKDGKLNAYWVMCNNNMQAGPNMNEEGLPGYRNPANFIVVSDPYPTVTAQAADLILPTAMWVEKEGAYGNAERRTQFWHQQVKPPEGAKSDLWQLMEFSKRFKVEEVWPAELIAKMPEVKGKTLFDVLYANGQVNQFPKEQSKGALNDEAEHFGFYVQKGLFEEYATFGRGHGHDLAPFDQYHEARGLRWPVVDGKETLWRYREGFDPYVKAGEGVRFYGKPDGKAVIFALPYEPAAEAPDKEYDMWLSTGRVLEHWHTGTMTRRVPELYRAFPDAVLFMHPEDAKARGVRRGEEVIVSSRRGEVKTRVETRGRNRPPKGLVFMPFFDASQLVNKLTLDATDPLSKETDYKKCAVKVVKA.

A signal peptide (tat-type signal) is located at residues 1–30 (MKLSRRDFMKANAVAAAAAVAGVSAPTLAA). Residues 41–97 (ITWDKAPCRFCGTGCSVLVGSQDGRVVATQGDPDAPVNRGLNCIKGYFLSKIMYGQD) form the 4Fe-4S Mo/W bis-MGD-type domain. Residues Cys-48, Cys-51, Cys-55, and Cys-83 each contribute to the [4Fe-4S] cluster site. Residues Lys-85, Gln-152, Asn-177, Cys-181, 214–221 (WGSNMAEM), 245–249 (STFEH), 264–266 (QTD), Met-374, Gln-378, Asn-484, 510–511 (SD), Lys-533, Asp-560, and 719–728 (TGRVLEHWHT) each bind Mo-bis(molybdopterin guanine dinucleotide). Phe-795 serves as a coordination point for substrate. Mo-bis(molybdopterin guanine dinucleotide) contacts are provided by Asn-803 and Lys-820.

It belongs to the prokaryotic molybdopterin-containing oxidoreductase family. NasA/NapA/NarB subfamily. Component of the periplasmic nitrate reductase NapAB complex composed of NapA and NapB. It depends on [4Fe-4S] cluster as a cofactor. Mo-bis(molybdopterin guanine dinucleotide) is required as a cofactor. Post-translationally, predicted to be exported by the Tat system. The position of the signal peptide cleavage has not been experimentally proven.

Its subcellular location is the periplasm. It catalyses the reaction 2 Fe(II)-[cytochrome] + nitrate + 2 H(+) = 2 Fe(III)-[cytochrome] + nitrite + H2O. Functionally, catalytic subunit of the periplasmic nitrate reductase complex NapAB. Receives electrons from NapB and catalyzes the reduction of nitrate to nitrite. This chain is Periplasmic nitrate reductase, found in Aeromonas hydrophila subsp. hydrophila (strain ATCC 7966 / DSM 30187 / BCRC 13018 / CCUG 14551 / JCM 1027 / KCTC 2358 / NCIMB 9240 / NCTC 8049).